The following is a 112-amino-acid chain: uncharacterized protein (112 aa).

Phosphoserine is present on residues S51 and S53. Residues 90-110 (FIFTLSMFLIAFILLIAFVSF) form a helical membrane-spanning segment.

The protein localises to the golgi apparatus membrane. Its subcellular location is the endoplasmic reticulum membrane. This is an uncharacterized protein from Schizosaccharomyces pombe (strain 972 / ATCC 24843) (Fission yeast).